Here is a 391-residue protein sequence, read N- to C-terminus: Putative glutamate--cysteine ligase 2-2 (391 aa).

The protein belongs to the glutamate--cysteine ligase type 2 family. YbdK subfamily.

It catalyses the reaction L-cysteine + L-glutamate + ATP = gamma-L-glutamyl-L-cysteine + ADP + phosphate + H(+). In terms of biological role, ATP-dependent carboxylate-amine ligase which exhibits weak glutamate--cysteine ligase activity. The chain is Putative glutamate--cysteine ligase 2-2 from Saccharopolyspora erythraea (strain ATCC 11635 / DSM 40517 / JCM 4748 / NBRC 13426 / NCIMB 8594 / NRRL 2338).